The chain runs to 552 residues: Chaperonin GroEL (552 aa).

ATP is bound by residues 30–33 (TLGP), Lys51, 87–91 (DGTTT), Gly415, 480–482 (NAA), and Asp496.

Belongs to the chaperonin (HSP60) family. As to quaternary structure, forms a cylinder of 14 subunits composed of two heptameric rings stacked back-to-back. Interacts with the co-chaperonin GroES.

It is found in the cytoplasm. It carries out the reaction ATP + H2O + a folded polypeptide = ADP + phosphate + an unfolded polypeptide.. Its function is as follows. Together with its co-chaperonin GroES, plays an essential role in assisting protein folding. The GroEL-GroES system forms a nano-cage that allows encapsulation of the non-native substrate proteins and provides a physical environment optimized to promote and accelerate protein folding. This Verminephrobacter eiseniae (strain EF01-2) protein is Chaperonin GroEL.